The sequence spans 284 residues: uncharacterized protein (284 aa).

A helical membrane pass occupies residues 12–32 (ILFILFVVAFCVYLVPRVAIN).

It belongs to the serine esterase family.

The protein resides in the membrane. This is an uncharacterized protein from Escherichia coli (strain K12).